The chain runs to 697 residues: UBA domain-containing protein 7 (697 aa).

The disordered stretch occupies residues 1 to 94 (MDDLLDFNFY…STPKSSNYDP (94 aa)). Positions 13 to 32 (STPSNQNNYSNNNSRTPSYS) are enriched in low complexity. Over residues 62-77 (KKTDNKISLKELERQK) the composition is skewed to basic and acidic residues. Over residues 81 to 92 (PDSNSTPKSSNY) the composition is skewed to polar residues. Residues 181–221 (KLSSNEMYEKLRDLGFSDDQSRLALENSGSLEDAIEYILEK) enclose the UBA domain. The disordered stretch occupies residues 306 to 346 (PEILPKTPIPKRKPHKVPMNEKVSEDRITTNQSRSGNDESS). The segment covering 323-333 (PMNEKVSEDRI) has biased composition (basic and acidic residues). Residues 334-345 (TTNQSRSGNDES) show a composition bias toward polar residues. The TPR repeat unit spans residues 412-445 (VEEQQSTGNELFRKGDFSQAIEEFTNSLSQLPAK). Positions 547 to 573 (ISSHSSESHSKRTTQQPKSTPNHTNIK) are disordered. Polar residues predominate over residues 559-573 (TTQQPKSTPNHTNIK). A J domain is found at 633-696 (CRWQKVSLSE…AWELFKQQND (64 aa)).

This Schizosaccharomyces pombe (strain 972 / ATCC 24843) (Fission yeast) protein is UBA domain-containing protein 7 (ucp7).